The chain runs to 809 residues: Leucine--tRNA ligase (809 aa).

Positions 40–50 (PYPSGRIHMGH) match the 'HIGH' region motif. A 'KMSKS' region motif is present at residues 579-583 (KMSKS). Position 582 (lysine 582) interacts with ATP.

It belongs to the class-I aminoacyl-tRNA synthetase family.

The protein localises to the cytoplasm. The catalysed reaction is tRNA(Leu) + L-leucine + ATP = L-leucyl-tRNA(Leu) + AMP + diphosphate. In Campylobacter lari (strain RM2100 / D67 / ATCC BAA-1060), this protein is Leucine--tRNA ligase.